A 349-amino-acid chain; its full sequence is PhoH-like protein (349 aa).

Residue 147–154 (GPAGTGKT) participates in ATP binding.

Belongs to the PhoH family.

Its subcellular location is the cytoplasm. The sequence is that of PhoH-like protein from Mycobacterium leprae (strain TN).